The sequence spans 570 residues: Spastin (570 aa).

Residues 1 to 35 (MNSGHKARLRGGRACGPVSDGSARGNRLLFYTRSL) lie on the Cytoplasmic side of the membrane. The segment at residues 36–52 (SRVPEWLLRVLLLLLRW) is an intramembrane region (helical). The Cytoplasmic segment spans residues 53-570 (LFQPIRRAMA…NREYGDTTGV (518 aa)). The region spanning 83–158 (YHKQAFEFIS…SMAEDRLKLL (76 aa)) is the MIT domain. Positions 186–269 (APASGAVSKK…SPQRKRDMKN (84 aa)) are disordered. Polar residues-rich tracts occupy residues 199–208 (LTITNQTSLR), 216–242 (TPNA…NQKG), and 251–261 (VKASTTATASP). 335-342 (GPPGNGKT) is an ATP binding site.

It belongs to the AAA ATPase family. Spastin subfamily. In terms of assembly, homohexamer. The homohexamer is stabilized by ATP-binding. The homohexamer may adopt a ring conformation through which microtubules pass prior to being severed. Interacts with microtubules.

It is found in the membrane. The protein localises to the cytoplasm. The protein resides in the cytoskeleton. It localises to the microtubule organizing center. Its subcellular location is the centrosome. It is found in the perinuclear region. The protein localises to the nucleus. It carries out the reaction n ATP + n H2O + a microtubule = n ADP + n phosphate + (n+1) alpha/beta tubulin heterodimers.. ATP-dependent microtubule severing protein that specifically recognizes and cuts microtubules that are polyglutamylated. Preferentially recognizes and acts on microtubules decorated with short polyglutamate tails: severing activity increases as the number of glutamates per tubulin rises from one to eight, but decreases beyond this glutamylation threshold. Microtubule severing promotes reorganization of cellular microtubule arrays and the release of microtubules from the centrosome following nucleation. Required for membrane traffic from the endoplasmic reticulum (ER) to the Golgi and for completion of the abscission stage of cytokinesis. Also plays a role in axon growth and the formation of axonal branches. The protein is Spastin of Danio rerio (Zebrafish).